Consider the following 65-residue polypeptide: MKPGIHPEYGKARVICACGETFETGSTKKEIRVEICSKCHPFYTGSQRTVEARGRAEQFKKKYGL.

Residues cysteine 16, cysteine 18, cysteine 36, and cysteine 39 each contribute to the Zn(2+) site.

The protein belongs to the bacterial ribosomal protein bL31 family. Type A subfamily. As to quaternary structure, part of the 50S ribosomal subunit. Zn(2+) serves as cofactor.

In terms of biological role, binds the 23S rRNA. The protein is Large ribosomal subunit protein bL31 of Carboxydothermus hydrogenoformans (strain ATCC BAA-161 / DSM 6008 / Z-2901).